The primary structure comprises 337 residues: Nicotinate-nucleotide--dimethylbenzimidazole phosphoribosyltransferase (337 aa).

Glu-305 (proton acceptor) is an active-site residue.

Belongs to the CobT family.

The catalysed reaction is 5,6-dimethylbenzimidazole + nicotinate beta-D-ribonucleotide = alpha-ribazole 5'-phosphate + nicotinate + H(+). It participates in nucleoside biosynthesis; alpha-ribazole biosynthesis; alpha-ribazole from 5,6-dimethylbenzimidazole: step 1/2. Catalyzes the synthesis of alpha-ribazole-5'-phosphate from nicotinate mononucleotide (NAMN) and 5,6-dimethylbenzimidazole (DMB). The polypeptide is Nicotinate-nucleotide--dimethylbenzimidazole phosphoribosyltransferase (Roseobacter denitrificans (strain ATCC 33942 / OCh 114) (Erythrobacter sp. (strain OCh 114))).